Here is a 387-residue protein sequence, read N- to C-terminus: Cobalt-precorrin-5B C(1)-methyltransferase (387 aa).

This sequence belongs to the CbiD family.

It carries out the reaction Co-precorrin-5B + S-adenosyl-L-methionine = Co-precorrin-6A + S-adenosyl-L-homocysteine. It functions in the pathway cofactor biosynthesis; adenosylcobalamin biosynthesis; cob(II)yrinate a,c-diamide from sirohydrochlorin (anaerobic route): step 6/10. In terms of biological role, catalyzes the methylation of C-1 in cobalt-precorrin-5B to form cobalt-precorrin-6A. The chain is Cobalt-precorrin-5B C(1)-methyltransferase from Desulfitobacterium hafniense (strain Y51).